The sequence spans 321 residues: MTNGVPALDDILERLHVVALPMRVRFRGITVRELALIDGPAGWGEFGAFVEYEPPEAAAWLSSALEAAYRPAPAALRDRVPINATVPAVSAERVPEVLARFPGARTAKVKVAEPGQSLADDVARVNAVRESVPVVRVDANGGWSVDDAVEAAAALTADGELEYLEQPCATVEELAALRARVDVPIAADESIRKAEDPLRVVRAHAADIAVLKVAPLGGVARMLDIAAQIDIPIVVSSALDSSVGIGRGLLAAAALPELRHACGLGTGGLFVDDVAEPRVPVDGCLAVEPAVPDPARLAALAAPEPRRQWWIDRVCACHALI.

Catalysis depends on Lys110, which acts as the Proton donor. Residues Asp138, Glu165, and Asp188 each coordinate Mg(2+). Lys212 functions as the Proton acceptor in the catalytic mechanism.

This sequence belongs to the mandelate racemase/muconate lactonizing enzyme family. MenC type 1 subfamily. The cofactor is a divalent metal cation.

It carries out the reaction (1R,6R)-6-hydroxy-2-succinyl-cyclohexa-2,4-diene-1-carboxylate = 2-succinylbenzoate + H2O. The protein operates within quinol/quinone metabolism; 1,4-dihydroxy-2-naphthoate biosynthesis; 1,4-dihydroxy-2-naphthoate from chorismate: step 4/7. It functions in the pathway quinol/quinone metabolism; menaquinone biosynthesis. In terms of biological role, converts 2-succinyl-6-hydroxy-2,4-cyclohexadiene-1-carboxylate (SHCHC) to 2-succinylbenzoate (OSB). This Mycolicibacterium smegmatis (strain ATCC 700084 / mc(2)155) (Mycobacterium smegmatis) protein is o-succinylbenzoate synthase.